A 225-amino-acid polypeptide reads, in one-letter code: Ribonuclease 3 (225 aa).

Residues Ile7–Glu129 enclose the RNase III domain. Mg(2+) is bound at residue Glu42. Asp46 is a catalytic residue. Mg(2+) is bound by residues Asp115 and Glu118. Residue Glu118 is part of the active site. Residues Asp155 to Lys225 form the DRBM domain.

Belongs to the ribonuclease III family. As to quaternary structure, homodimer. Mg(2+) is required as a cofactor.

It localises to the cytoplasm. The enzyme catalyses Endonucleolytic cleavage to 5'-phosphomonoester.. In terms of biological role, digests double-stranded RNA. Involved in the processing of primary rRNA transcript to yield the immediate precursors to the large and small rRNAs (23S and 16S). Processes some mRNAs, and tRNAs when they are encoded in the rRNA operon. Processes pre-crRNA and tracrRNA of type II CRISPR loci if present in the organism. This chain is Ribonuclease 3, found in Shewanella halifaxensis (strain HAW-EB4).